The sequence spans 288 residues: MESGDLKIFQAVARKGSISKAAESLHYVQSNVTNRIQQLERQLQTQLFYRTNRGMTLTPAGENLLKDADRILQLLHEAQKTAQEAGDPNGPLRIGSLETAAAVHLPQFFTEYCSRYPKVQLSLSTGDTHTLVQHILHYELDGAFVYGPVEYEDLEQVAVFQEELVLASNKREGSLQDLLREPILYFAAGCSHRRKIKNILKEEAVPAHKIIEFGTLEAIIGAVQAGMGVSFLPASAVRYFQNRKNLFLHELPEQFRDMNISFIYQSDLFLTSAFEELLNGLKALPNGR.

The region spanning 1 to 58 is the HTH lysR-type domain; sequence MESGDLKIFQAVARKGSISKAAESLHYVQSNVTNRIQQLERQLQTQLFYRTNRGMTLT. Positions 18-37 form a DNA-binding region, H-T-H motif; sequence ISKAAESLHYVQSNVTNRIQ.

This sequence belongs to the LysR transcriptional regulatory family.

It localises to the cytoplasm. Functionally, regulates expression of the cell division protein ftsW, and is essential for cell viability during stationary phase. The protein is HTH-type transcriptional regulator YofA (yofA) of Bacillus velezensis (strain DSM 23117 / BGSC 10A6 / LMG 26770 / FZB42) (Bacillus amyloliquefaciens subsp. plantarum).